The primary structure comprises 111 residues: Probable 4-amino-4-deoxy-L-arabinose-phosphoundecaprenol flippase subunit ArnE (111 aa).

The next 3 helical transmembrane spans lie at 38–58 (LWLGLALICMGAAMVLWLLVL), 61–81 (LPVGIAYPMLSLNFVWVTLAA), and 91–111 (PRHWLGVALIISGIIILGSAA). The 70-residue stretch at 40-109 (LGLALICMGA…IISGIIILGS (70 aa)) folds into the EamA domain.

It belongs to the ArnE family. In terms of assembly, heterodimer of ArnE and ArnF.

The protein resides in the cell inner membrane. It functions in the pathway bacterial outer membrane biogenesis; lipopolysaccharide biosynthesis. Functionally, translocates 4-amino-4-deoxy-L-arabinose-phosphoundecaprenol (alpha-L-Ara4N-phosphoundecaprenol) from the cytoplasmic to the periplasmic side of the inner membrane. The sequence is that of Probable 4-amino-4-deoxy-L-arabinose-phosphoundecaprenol flippase subunit ArnE from Salmonella choleraesuis (strain SC-B67).